A 555-amino-acid chain; its full sequence is Glutamine--tRNA ligase (555 aa).

The 'HIGH' region signature appears at 34–44; that stretch reads PEPNGYLHIGH. Residues 35 to 37 and 41 to 47 contribute to the ATP site; these read EPN and HIGHAKS. The L-glutamine site is built by Asp67 and Tyr212. ATP contacts are provided by residues Thr231, 261–262, and 269–271; these read RL and MSK. The 'KMSKS' region motif lies at 268 to 272; it reads IMSKR.

The protein belongs to the class-I aminoacyl-tRNA synthetase family. Monomer.

The protein resides in the cytoplasm. The catalysed reaction is tRNA(Gln) + L-glutamine + ATP = L-glutaminyl-tRNA(Gln) + AMP + diphosphate. The chain is Glutamine--tRNA ligase from Yersinia pseudotuberculosis serotype O:1b (strain IP 31758).